Consider the following 435-residue polypeptide: MRKELCRNFQRGSCRYGENCRFLHPQQAKPNNPFGFGTQNQQQQQQQQQQNSSNPFGFGVQSGGSSRPNQFQNTWSRTASTPTGGGAAASTQQTGKQTQPADHKCTDPAACKRVMQDDFKNERPMWKLTCYGHWKYFPCDVTGDISYEELRAVAYEEAKRGIPLQSIVERERNLQNSKIAEFENFLRNPYKGSVTANQSPFAATTPSIFPQSSQINSPSPAFSGFNQQTAFSNTNAGGLSSSGPPNAFASFNQQTTFPNTNAGGVSSSGPPNPFASFTQQSNNQQTAFSNTNAGGLSSSGPPNAFASFNKQPNAFSVNTPQPVPSGPSGFQTNPSTTFKPASFGPGPGFATTPQNNNIFGQSTPTPATNTSQNNQTAFNFNVPVASFTAPAINTTNTSSGTELQIGGDPVDSSIWLKEKWNPGEIPEQAPPDAFV.

Residues 1–27 form a C3H1-type zinc finger; the sequence is MRKELCRNFQRGSCRYGENCRFLHPQQ. A 6 X 2 AA repeats of F-G region spans residues 2–88; it reads RKELCRNFQR…ASTPTGGGAA (87 aa). Disordered regions lie at residues 25–105 and 205–374; these read PQQA…DHKC and TPSI…SQNN. 2 repeat units span residues 34 to 35 and 36 to 37. Low complexity predominate over residues 39–51; it reads QNQQQQQQQQQQN. Tandem repeats lie at residues 56–57 and 58–59. Residues 63–77 show a composition bias toward polar residues; sequence GGSSRPNQFQNTWSR. Residues 78-99 are compositionally biased toward low complexity; sequence TASTPTGGGAAASTQQTGKQTQ. Composition is skewed to polar residues over residues 205–320 and 328–339; these read TPSI…VNTP and SGFQTNPSTTFK. 2 tandem repeats follow at residues 343–344 and 359–360. The span at 351–374 shows a compositional bias: polar residues; the sequence is TTPQNNNIFGQSTPTPATNTSQNN.

As to quaternary structure, part of the nuclear pore complex (NPC). The NPC has an eight-fold symmetrical structure comprising a central transport channel and two rings, the cytoplasmic and nuclear rings, to which eight filaments are attached. The cytoplasmic filaments have loose ends, while the nuclear filaments are joined in a distal ring, forming a nuclear basket. NPCs are highly dynamic in configuration and composition, and can be devided in 3 subcomplexes, the NUP62 subcomplex, the NUP107-160 subcomplex and the NUP93 subcomplex, containing approximately 30 different nucleoporin proteins.

It is found in the nucleus envelope. The protein localises to the nucleus. The protein resides in the nuclear pore complex. This Arabidopsis thaliana (Mouse-ear cress) protein is Zinc finger CCCH domain-containing protein 16.